The following is a 971-amino-acid chain: Exportin-2 (971 aa).

An N-acetylmethionine modification is found at Met1. One can recognise an Importin N-terminal domain in the interval 29–102 (AEKFLESVEG…KANIVHLMLS (74 aa)). The residue at position 112 (Ser112) is a Phosphoserine. N6-acetyllysine occurs at positions 574 and 824. Ser931 carries the post-translational modification Phosphoserine.

This sequence belongs to the XPO2/CSE1 family. As to quaternary structure, found in a complex with CSE1L/XPO2, Ran and KPNA2. Binds with high affinity to importin-alpha only in the presence of RanGTP. The complex is dissociated by the combined action of RanBP1 and RanGAP1. Interacts with CFTR.

It is found in the cytoplasm. Its subcellular location is the nucleus. Functionally, export receptor for importin-alpha. Mediates importin-alpha re-export from the nucleus to the cytoplasm after import substrates (cargos) have been released into the nucleoplasm. In the nucleus binds cooperatively to importin-alpha and to the GTPase Ran in its active GTP-bound form. Docking of this trimeric complex to the nuclear pore complex (NPC) is mediated through binding to nucleoporins. Upon transit of a nuclear export complex into the cytoplasm, disassembling of the complex and hydrolysis of Ran-GTP to Ran-GDP (induced by RANBP1 and RANGAP1, respectively) cause release of the importin-alpha from the export receptor. CSE1L/XPO2 then return to the nuclear compartment and mediate another round of transport. The directionality of nuclear export is thought to be conferred by an asymmetric distribution of the GTP- and GDP-bound forms of Ran between the cytoplasm and nucleus. This Bos taurus (Bovine) protein is Exportin-2 (CSE1L).